We begin with the raw amino-acid sequence, 937 residues long: Translation initiation factor IF-2 (937 aa).

The disordered stretch occupies residues 47–352 (RAAFQTKATP…EMPQRKERPL (306 aa)). Positions 52–68 (TKATPAASKPATPAAPK) are enriched in low complexity. The span at 97–116 (QHSNNRPQANANRNGQASNG) shows a compositional bias: polar residues. Over residues 117-153 (QNRTNNARPNNNSARPNNSRPNTNSRPNNNSQNRSTS) the composition is skewed to low complexity. Residues 154-169 (ANHPMSLQEQISQANA) are compositionally biased toward polar residues. The span at 173–197 (RTQERIQQQREQREADEKKRREQAN) shows a compositional bias: basic and acidic residues. A compositionally biased stretch (polar residues) spans 202–229 (TRNNASNNRPSNGKPTNGARPTTNSPRP). Residues 240–269 (SSRPNNNNSARPNTTNNRPTNSRPATTPSR) are compositionally biased toward low complexity. The span at 274–298 (QEMQQKMQANTVSASKPASNNTASK) shows a compositional bias: polar residues. Residues 322-331 (FNKKRKKTRK) show a composition bias toward basic residues. The segment covering 339 to 352 (AAKKEMPQRKERPL) has biased composition (basic and acidic residues). The tr-type G domain maps to 438-607 (SRPPVVTIMG…LLEADVLELK (170 aa)). Positions 447 to 454 (GHVDHGKT) are G1. 447-454 (GHVDHGKT) is a binding site for GTP. Residues 472 to 476 (GITQH) form a G2 region. A G3 region spans residues 493 to 496 (DTPG). Residues 493 to 497 (DTPGH) and 547 to 550 (NKID) contribute to the GTP site. Residues 547-550 (NKID) are G4. The tract at residues 583 to 585 (SAK) is G5.

Belongs to the TRAFAC class translation factor GTPase superfamily. Classic translation factor GTPase family. IF-2 subfamily.

Its subcellular location is the cytoplasm. In terms of biological role, one of the essential components for the initiation of protein synthesis. Protects formylmethionyl-tRNA from spontaneous hydrolysis and promotes its binding to the 30S ribosomal subunits. Also involved in the hydrolysis of GTP during the formation of the 70S ribosomal complex. The protein is Translation initiation factor IF-2 of Latilactobacillus sakei subsp. sakei (strain 23K) (Lactobacillus sakei subsp. sakei).